The chain runs to 340 residues: Hyaluronan and proteoglycan link protein 2 (340 aa).

Residues 1 to 26 (MPGWLTLPTLCRFLLWAFTIFHKAQG) form the signal peptide. Residues 34 to 144 (PHYLLPPIHE…EDESVALTLS (111 aa)) enclose the Ig-like V-type domain. Cystine bridges form between C57-C128, C170-C240, C194-C215, C265-C336, and C290-C311. Link domains follow at residues 148-242 (VVFP…FCFT) and 245-338 (LAGQ…YCYA).

The protein belongs to the HAPLN family. As to expression, expressed only in adult brain.

It localises to the secreted. The protein resides in the extracellular space. The protein localises to the extracellular matrix. Mediates a firm binding of versican V2 to hyaluronic acid. May play a pivotal role in the formation of the hyaluronan-associated matrix in the central nervous system (CNS) which facilitates neuronal conduction and general structural stabilization. Binds to hyaluronic acid. The sequence is that of Hyaluronan and proteoglycan link protein 2 (HAPLN2) from Homo sapiens (Human).